A 54-amino-acid polypeptide reads, in one-letter code: MLYYAVVFFVIAIIAAVLGFGGIAAGAAGIAKILFFVFLILALLSILSGAFRKK.

The next 2 helical transmembrane spans lie at 5–25 and 27–47; these read AVVFFVIAIIAAVLGFGGIAA and AAGIAKILFFVFLILALLSIL.

It belongs to the UPF0391 family.

The protein localises to the cell membrane. This chain is UPF0391 membrane protein Bpet1858, found in Bordetella petrii (strain ATCC BAA-461 / DSM 12804 / CCUG 43448).